The sequence spans 231 residues: MSERAPVVTIDGPSGAGKGTIAHLLAKHYGWQLLDSGAIYRVLALAALHHNVELENEEAITLLAAHLDVQFLAGGDKDAIKVVLEGEDVTGAIRTQECSNAASKVAAFPRVREALLRRQRAFCQAPGLIADGRDMGTVVFPTAPAKLYLTASAEERAQRRYNQLQDKGFDVKIDRLLAEIQERDDRDMNRPVAPLVPADDALVIDTTGIGIDDVFAQCVAHINDKLSASGF.

An ATP-binding site is contributed by 12 to 20 (GPSGAGKGT).

This sequence belongs to the cytidylate kinase family. Type 1 subfamily.

The protein resides in the cytoplasm. It carries out the reaction CMP + ATP = CDP + ADP. The enzyme catalyses dCMP + ATP = dCDP + ADP. The polypeptide is Cytidylate kinase (Shewanella amazonensis (strain ATCC BAA-1098 / SB2B)).